A 552-amino-acid polypeptide reads, in one-letter code: MSDIALTVSMLSLVAVLGLWIGNWRIYGVGLGIGGVLFGGIIVGHFAQRYQLDLNSDMLHFIQEFGLILFVYSIGIQVGPGFFSSLRVSGLRLNAFAVLMVLISGLITAAIHKLFAVPLPIILGIFSGAVTNTPALGAGQQILTDLGSNPSQIDLMGMGYAMAYPFGICGILLVIWLIRLLFRINIDAEARDFDSRNGHSHELLQTMNIMVRNPNLSGLSIQEVPILNSDTIVCSRLKRGDFLMVPLPTTQIESGDLLHLVGQKQELENARLVIGEQVDTSLSTRGTELQVSRVVVTNERVLGKKIRDLNLKQRYDVVISRLNRAGVELVAGNNATLQFGDILNLVGRPQAIDAVAAIVGNAQQKLQQVQMLPVFIGIGLGVLLGSVPLFIPGFPAALKLGLAGGPLVVALILGRIGSIGKLYWFMPPSANLALRELGIVLFLAVVGLKSGGNFIDTLLNGEGVTWIGYGILITAIPLLTAALLARLMIKMNYLTLCGMLAGAMTDPPALAFANGLHATSGAAALSYATVYPLAMFLRIMSPQLLALLFWSV.

5 helical membrane-spanning segments follow: residues 4–24, 26–46, 65–85, 90–112, and 158–178; these read IALTVSMLSLVAVLGLWIGNW, IYGVGLGIGGVLFGGIIVGHF, FGLILFVYSIGIQVGPGFFSS, GLRLNAFAVLMVLISGLITAAIH, and MGYAMAYPFGICGILLVIWLI. 2 RCK C-terminal domains span residues 191–276 and 279–361; these read RDFD…VIGE and DTSL…IVGN. 6 helical membrane-spanning segments follow: residues 371-391, 403-425, 439-459, 464-484, 493-513, and 530-550; these read MLPVFIGIGLGVLLGSVPLFI, AGGPLVVALILGRIGSIGKLYWF, IVLFLAVVGLKSGGNFIDTLL, VTWIGYGILITAIPLLTAALL, YLTLCGMLAGAMTDPPALAFA, and VYPLAMFLRIMSPQLLALLFW.

It belongs to the AAE transporter (TC 2.A.81) family. YidE subfamily.

It is found in the cell membrane. In Edwardsiella ictaluri (strain 93-146), this protein is Putative transport protein NT01EI_3867.